The chain runs to 445 residues: 3-phosphoshikimate 1-carboxyvinyltransferase (445 aa).

The disordered stretch occupies residues 1-25; sequence MTDSNQPTPLQARKSGALHGTARVP. 3-phosphoshikimate is bound by residues Lys-28, Ser-29, and Arg-33. A phosphoenolpyruvate-binding site is contributed by Lys-28. Residues Gly-101 and Arg-129 each contribute to the phosphoenolpyruvate site. Positions 175, 177, 328, and 355 each coordinate 3-phosphoshikimate. A phosphoenolpyruvate-binding site is contributed by Gln-177. Asp-328 functions as the Proton acceptor in the catalytic mechanism. 2 residues coordinate phosphoenolpyruvate: Arg-359 and Arg-402.

Belongs to the EPSP synthase family. As to quaternary structure, monomer.

It is found in the cytoplasm. It carries out the reaction 3-phosphoshikimate + phosphoenolpyruvate = 5-O-(1-carboxyvinyl)-3-phosphoshikimate + phosphate. It functions in the pathway metabolic intermediate biosynthesis; chorismate biosynthesis; chorismate from D-erythrose 4-phosphate and phosphoenolpyruvate: step 6/7. Its function is as follows. Catalyzes the transfer of the enolpyruvyl moiety of phosphoenolpyruvate (PEP) to the 5-hydroxyl of shikimate-3-phosphate (S3P) to produce enolpyruvyl shikimate-3-phosphate and inorganic phosphate. This is 3-phosphoshikimate 1-carboxyvinyltransferase from Rhodopseudomonas palustris (strain TIE-1).